A 239-amino-acid polypeptide reads, in one-letter code: Probable 2-phosphosulfolactate phosphatase (239 aa).

This sequence belongs to the ComB family. It depends on Mg(2+) as a cofactor.

The catalysed reaction is (2R)-O-phospho-3-sulfolactate + H2O = (2R)-3-sulfolactate + phosphate. This is Probable 2-phosphosulfolactate phosphatase from Clostridium botulinum (strain Okra / Type B1).